A 245-amino-acid chain; its full sequence is Orotidine 5'-phosphate decarboxylase (245 aa).

Substrate-binding positions include D22, K44, 71 to 80, T131, R192, Q201, G221, and R222; that span reads DLKFHDIPNT. The Proton donor role is filled by K73.

The protein belongs to the OMP decarboxylase family. Type 1 subfamily. In terms of assembly, homodimer.

It catalyses the reaction orotidine 5'-phosphate + H(+) = UMP + CO2. Its pathway is pyrimidine metabolism; UMP biosynthesis via de novo pathway; UMP from orotate: step 2/2. Catalyzes the decarboxylation of orotidine 5'-monophosphate (OMP) to uridine 5'-monophosphate (UMP). In Escherichia coli O45:K1 (strain S88 / ExPEC), this protein is Orotidine 5'-phosphate decarboxylase.